The primary structure comprises 279 residues: Stathmin domain-containing protein 1 (279 aa).

2 disordered regions span residues 1 to 110 and 178 to 254; these read MGCG…ERPK and AAEE…VAQM. Residue Gly-2 is the site of N-myristoyl glycine attachment. A compositionally biased stretch (basic and acidic residues) spans 22–32; it reads KGWEEGSKADV. Over residues 34–45 the composition is skewed to polar residues; sequence VTSSKENCSPQT. The SLD domain occupies 121–248; the sequence is QGIIQSRSKV…GEPLKRKKSE (128 aa). 2 stretches are compositionally biased toward basic and acidic residues: residues 178–191 and 232–242; these read AAEE…EEIR and EKSDVQEGEPL.

In Mus musculus (Mouse), this protein is Stathmin domain-containing protein 1 (Stmnd1).